Here is an 878-residue protein sequence, read N- to C-terminus: Alanine--tRNA ligase (878 aa).

The Zn(2+) site is built by histidine 562, histidine 566, cysteine 670, and histidine 674.

The protein belongs to the class-II aminoacyl-tRNA synthetase family. Zn(2+) is required as a cofactor.

The protein resides in the cytoplasm. The enzyme catalyses tRNA(Ala) + L-alanine + ATP = L-alanyl-tRNA(Ala) + AMP + diphosphate. Catalyzes the attachment of alanine to tRNA(Ala) in a two-step reaction: alanine is first activated by ATP to form Ala-AMP and then transferred to the acceptor end of tRNA(Ala). Also edits incorrectly charged Ser-tRNA(Ala) and Gly-tRNA(Ala) via its editing domain. This is Alanine--tRNA ligase from Acinetobacter baumannii (strain ACICU).